Reading from the N-terminus, the 310-residue chain is Ribosomal RNA small subunit methyltransferase H (310 aa).

S-adenosyl-L-methionine-binding positions include 32-34, D52, F79, D100, and Q107; that span reads GGH.

It belongs to the methyltransferase superfamily. RsmH family.

It localises to the cytoplasm. It carries out the reaction cytidine(1402) in 16S rRNA + S-adenosyl-L-methionine = N(4)-methylcytidine(1402) in 16S rRNA + S-adenosyl-L-homocysteine + H(+). Its function is as follows. Specifically methylates the N4 position of cytidine in position 1402 (C1402) of 16S rRNA. In Bacillus cereus (strain AH187), this protein is Ribosomal RNA small subunit methyltransferase H.